A 458-amino-acid polypeptide reads, in one-letter code: (R)-6-hydroxynicotine oxidase (458 aa).

Residues 33–204 form the FAD-binding PCMH-type domain; sequence RHLQRPSLIA…TEVEVQLYEL (172 aa). Residues 67–73, 129–130, 134–137, G144, T195, N413, and N450 each bind FAD; these read RSGGHNP, HP, and FCGL. H71 carries the post-translational modification Pros-8alpha-FAD histidine.

Belongs to the oxygen-dependent FAD-linked oxidoreductase family. Monomer. FAD serves as cofactor.

The protein resides in the cytoplasm. The enzyme catalyses (R)-6-hydroxynicotine + O2 + H2O = 6-hydroxypseudooxynicotine + H2O2. It catalyses the reaction (R)-6-hydroxynicotine + O2 = 6-hydroxy-N-methylmyosmine + H2O2. Its pathway is alkaloid degradation; nicotine degradation; 6-hydroxypseudooxynicotine from nicotine (R-isomer route): step 2/2. Its activity is regulated as follows. Inhibited by (S)-6-hydroxynicotine. Inhibited by high concentrations of phenanthroline. Its function is as follows. Involved in the degradation of D-nicotine. Catalyzes the oxidation of (R)-6-hydroxynicotine (6-hydroxy-D-nicotine) to 6-hydroxypseudooxynicotine. Oxidation of the pyrrolidine ring of (R)-6-hydroxynicotine leads to the formation of the optically inactive 6-hydroxy-N-methylmyosmine, which hydrolyzes spontaneously to 6-hydroxypseudooxynicotine. Acts with absolute stereospecificity on the D-form of 6-hydroxynicotine. Shows lower activity with (R)-6-hydroxynornicotine, and weak activity with (R)-4-(1-methylpyrrolidine-2-yl)phenol, (R)-6-chloronicotine and (R)-nicotine. This is (R)-6-hydroxynicotine oxidase from Paenarthrobacter nicotinovorans (Arthrobacter nicotinovorans).